The primary structure comprises 115 residues: Guanylin (115 aa).

The N-terminal stretch at 1–21 is a signal peptide; that stretch reads MNAFLLSALCLLGAWAALAGG. Disulfide bonds link Cys69–Cys82, Cys104–Cys112, and Cys107–Cys115.

The protein belongs to the guanylin family. Highly expressed in ileum and colon. Found in plasma.

The protein resides in the secreted. In terms of biological role, endogenous activator of intestinal guanylate cyclase. It stimulates this enzyme through the same receptor binding region as the heat-stable enterotoxins. The protein is Guanylin (GUCA2A) of Homo sapiens (Human).